A 237-amino-acid polypeptide reads, in one-letter code: Ribosomal RNA large subunit methyltransferase E (237 aa).

Positions 76, 78, 99, 115, and 139 each coordinate S-adenosyl-L-methionine. K179 functions as the Proton acceptor in the catalytic mechanism.

The protein belongs to the class I-like SAM-binding methyltransferase superfamily. RNA methyltransferase RlmE family.

Its subcellular location is the cytoplasm. The enzyme catalyses uridine(2552) in 23S rRNA + S-adenosyl-L-methionine = 2'-O-methyluridine(2552) in 23S rRNA + S-adenosyl-L-homocysteine + H(+). Its function is as follows. Specifically methylates the uridine in position 2552 of 23S rRNA at the 2'-O position of the ribose in the fully assembled 50S ribosomal subunit. This chain is Ribosomal RNA large subunit methyltransferase E, found in Rhodopseudomonas palustris (strain ATCC BAA-98 / CGA009).